Reading from the N-terminus, the 78-residue chain is Small ribosomal subunit protein uS17 (78 aa).

The protein belongs to the universal ribosomal protein uS17 family. Part of the 30S ribosomal subunit.

Its function is as follows. One of the primary rRNA binding proteins, it binds specifically to the 5'-end of 16S ribosomal RNA. The sequence is that of Small ribosomal subunit protein uS17 from Maricaulis maris (strain MCS10) (Caulobacter maris).